A 340-amino-acid chain; its full sequence is Proline-rich transmembrane protein 2 (340 aa).

The disordered stretch occupies residues 1–261 (MAASSSEISE…AGPGVEGGEG (261 aa)). Topologically, residues 1–268 (MAASSSEISE…GEGTQKPRDY (268 aa)) are cytoplasmic. At S28 the chain carries Phosphoserine. T74 carries the phosphothreonine modification. Pro residues-rich tracts occupy residues 131-155 (PPEP…PKPA) and 197-207 (APEPHSPPSKK). The residue at position 238 (S238) is a Phosphoserine. The residue at position 240 (R240) is an Omega-N-methylarginine. S248 and S249 each carry phosphoserine. An intramembrane region (helical) is located at residues 269–289 (IILAILSCFCPMWPVNIVAFA). The Cytoplasmic segment spans residues 290–317 (YAVMSRNSLQQGDVDGAQRLGRVAKLLS). Residues 318 to 338 (IVALVGGVLIIIASCVINLGV) form a helical membrane-spanning segment. Residues 339–340 (YK) are Extracellular-facing.

It belongs to the CD225/Dispanin family. In terms of assembly, component of the outer core of AMPAR complex. AMPAR complex consists of an inner core made of 4 pore-forming GluA/GRIA proteins (GRIA1, GRIA2, GRIA3 and GRIA4) and 4 major auxiliary subunits arranged in a twofold symmetry. One of the two pairs of distinct binding sites is occupied either by CNIH2, CNIH3 or CACNG2, CACNG3. The other harbors CACNG2, CACNG3, CACNG4, CACNG8 or GSG1L. This inner core of AMPAR complex is complemented by outer core constituents binding directly to the GluA/GRIA proteins at sites distinct from the interaction sites of the inner core constituents. Outer core constituents include at least PRRT1, PRRT2, CKAMP44/SHISA9, FRRS1L and NRN1. The proteins of the inner and outer core serve as a platform for other, more peripherally associated AMPAR constituents. Alone or in combination, these auxiliary subunits control the gating and pharmacology of the AMPAR complex and profoundly impact their biogenesis and protein processing. Interacts with intersectin 1/ITSN1. Interacts with SNARE complex components, including SNAP25, STX1A, SYT1 and SYT2; this interaction may inhibit SNARE complex formation.

It is found in the cell membrane. The protein resides in the presynaptic cell membrane. Its subcellular location is the synapse. It localises to the cell projection. The protein localises to the axon. It is found in the cytoplasmic vesicle. The protein resides in the secretory vesicle. Its subcellular location is the synaptic vesicle membrane. It localises to the postsynaptic density membrane. The protein localises to the dendritic spine. In terms of biological role, as a component of the outer core of AMPAR complex, may be involved in synaptic transmission in the central nervous system. In hippocampal neurons, in presynaptic terminals, plays an important role in the final steps of neurotransmitter release, possibly by regulating Ca(2+)-sensing. In the cerebellum, may inhibit SNARE complex formation and down-regulate short-term facilitation. The polypeptide is Proline-rich transmembrane protein 2 (PRRT2) (Pongo abelii (Sumatran orangutan)).